The primary structure comprises 188 residues: UPF0340 protein BH3766 (188 aa).

The protein belongs to the UPF0340 family.

The protein is UPF0340 protein BH3766 of Halalkalibacterium halodurans (strain ATCC BAA-125 / DSM 18197 / FERM 7344 / JCM 9153 / C-125) (Bacillus halodurans).